A 424-amino-acid polypeptide reads, in one-letter code: UDP-N-acetylglucosamine 1-carboxyvinyltransferase (424 aa).

Residue 22 to 23 (KN) participates in phosphoenolpyruvate binding. Residue Arg-93 participates in UDP-N-acetyl-alpha-D-glucosamine binding. Cys-117 serves as the catalytic Proton donor. Position 117 is a 2-(S-cysteinyl)pyruvic acid O-phosphothioketal (Cys-117). UDP-N-acetyl-alpha-D-glucosamine-binding positions include 122–126 (RPVDL), 162–165 (KVSV), Asp-307, and Ile-329.

The protein belongs to the EPSP synthase family. MurA subfamily.

The protein localises to the cytoplasm. It carries out the reaction phosphoenolpyruvate + UDP-N-acetyl-alpha-D-glucosamine = UDP-N-acetyl-3-O-(1-carboxyvinyl)-alpha-D-glucosamine + phosphate. The protein operates within cell wall biogenesis; peptidoglycan biosynthesis. Functionally, cell wall formation. Adds enolpyruvyl to UDP-N-acetylglucosamine. This chain is UDP-N-acetylglucosamine 1-carboxyvinyltransferase, found in Haemophilus influenzae (strain PittGG).